The chain runs to 186 residues: Elongation factor P (186 aa).

N-alpha-linked (Rha) arginine glycosylation occurs at arginine 32.

The protein belongs to the elongation factor P family. Glycosylated ar Arg-32 by EarP: arginine rhamnosylation is required for EF-P function and rescue of polyproline stalled ribosomes.

The protein localises to the cytoplasm. The protein operates within protein biosynthesis; polypeptide chain elongation. Its function is as follows. Involved in peptide bond synthesis. Stimulates efficient translation and peptide-bond synthesis on native or reconstituted 70S ribosomes in vitro. Probably functions indirectly by altering the affinity of the ribosome for aminoacyl-tRNA, thus increasing their reactivity as acceptors for peptidyl transferase. This is Elongation factor P from Shewanella oneidensis (strain ATCC 700550 / JCM 31522 / CIP 106686 / LMG 19005 / NCIMB 14063 / MR-1).